The following is a 366-amino-acid chain: tRNA/tmRNA (uracil-C(5))-methyltransferase (366 aa).

The S-adenosyl-L-methionine site is built by Gln190, Tyr218, Asn223, Glu239, and Asp299. Catalysis depends on Cys324, which acts as the Nucleophile. Catalysis depends on Glu358, which acts as the Proton acceptor.

Belongs to the class I-like SAM-binding methyltransferase superfamily. RNA M5U methyltransferase family. TrmA subfamily.

The enzyme catalyses uridine(54) in tRNA + S-adenosyl-L-methionine = 5-methyluridine(54) in tRNA + S-adenosyl-L-homocysteine + H(+). The catalysed reaction is uridine(341) in tmRNA + S-adenosyl-L-methionine = 5-methyluridine(341) in tmRNA + S-adenosyl-L-homocysteine + H(+). In terms of biological role, dual-specificity methyltransferase that catalyzes the formation of 5-methyluridine at position 54 (m5U54) in all tRNAs, and that of position 341 (m5U341) in tmRNA (transfer-mRNA). The chain is tRNA/tmRNA (uracil-C(5))-methyltransferase from Edwardsiella ictaluri (strain 93-146).